Consider the following 470-residue polypeptide: Cysteine--tRNA ligase (470 aa).

A Zn(2+)-binding site is contributed by Cys-30. Positions 32 to 42 (PTVYNYIHIGN) match the 'HIGH' region motif. 3 residues coordinate Zn(2+): Cys-211, His-236, and Glu-240. The 'KMSKS' region signature appears at 268–272 (KMSKS). Residue Lys-271 coordinates ATP.

The protein belongs to the class-I aminoacyl-tRNA synthetase family. In terms of assembly, monomer. The cofactor is Zn(2+).

It is found in the cytoplasm. The catalysed reaction is tRNA(Cys) + L-cysteine + ATP = L-cysteinyl-tRNA(Cys) + AMP + diphosphate. The sequence is that of Cysteine--tRNA ligase from Fervidobacterium nodosum (strain ATCC 35602 / DSM 5306 / Rt17-B1).